Reading from the N-terminus, the 643-residue chain is MPIITLPDGAQRTYSTPVTIAEIAAEIGPGLAKAAIAGEVNGELVDTCIPISVNANINIITSKNKEGIDIIRHSFAHLLGHAIKQLYPDAKMAIGPVIENGFYYDIAYKDTFSLDDLNQIELRIKELIKQDYDVVVEEVSKEKARKTFLDRDEAYKVQIIDEIPDNETIKLYKHQEYIDMCRGPHVPNTKHLRAFSLMKVSGAYWRGDSNNEMLQRIYGTAWGSTKELEAYLLKIEEAEKRDHRKIGKKLDLFHTQEEAPGMIFWHPKGWSIYQVLESFIRETLILNDYKEIKTPQTVDRSLWEKSGHWDKFKEDMFTTTSENREYAIKPMNCPCHIQVFNEGLKSYRDLPIRLAEFGSCHRNEPSGALHGLMRVRNFVQDDAHIFCTEAQIQDEVSKFIDLVFDVYKAFGFESIIIKLSTRPTKRVGSDEIWDKSEKALADALNIKKFEWSYLPGEGAFYGPKIEFSLKDCIDRVWQCGTIQVDFSMPHRLGASYIDENSQKKVPVMLHRAILGSFERFIGILIEEYEGKFPPWLSPIQVIVIGITDRNSIKCKEISNLLMLRGYRATYDTRNEKVGLKIREHTLQRIPYLLIIGDKEQEEGTVSVRTMHGIDMGSMKLTEFQEIINEAISLKGNYKPVPKR.

The TGS domain maps to 1-61 (MPIITLPDGA…SVNANINIIT (61 aa)). A catalytic region spans residues 242 to 533 (DHRKIGKKLD…LIEEYEGKFP (292 aa)). Zn(2+)-binding residues include Cys-333, His-384, and His-510.

This sequence belongs to the class-II aminoacyl-tRNA synthetase family. Homodimer. Zn(2+) serves as cofactor.

It localises to the cytoplasm. The catalysed reaction is tRNA(Thr) + L-threonine + ATP = L-threonyl-tRNA(Thr) + AMP + diphosphate + H(+). Catalyzes the attachment of threonine to tRNA(Thr) in a two-step reaction: L-threonine is first activated by ATP to form Thr-AMP and then transferred to the acceptor end of tRNA(Thr). Also edits incorrectly charged L-seryl-tRNA(Thr). The polypeptide is Threonine--tRNA ligase (Prochlorococcus marinus (strain SARG / CCMP1375 / SS120)).